The following is a 630-amino-acid chain: Telomere repeat-binding protein 5 (630 aa).

Disordered regions lie at residues 1-38 (MVLQKRPDYGFNGYEVPHTPRAARSPRKSAFKKKSENH), 56-78 (EGGNSSSSSNNTSGNNEDQCAVK), and 308-327 (YTASQSEETNKNEGQSGSPR). A compositionally biased stretch (low complexity) spans 57–71 (GGNSSSSSNNTSGNN). Polar residues predominate over residues 309–325 (TASQSEETNKNEGQSGS). Residues 354–433 (VKLGIKSFRV…SDTLGFCLEP (80 aa)) enclose the Ubiquitin-like domain. A disordered region spans residues 463–489 (LPSPGKHAKPSNSVESDLDSKPSAPNR). The region spanning 523–582 (AQRRIRRPFSVAEVEALVQAVERLGTGRWRDVKLRAFDNAKHRTYVDLKDKWKTLVHTAR) is the HTH myb-type domain. Residues 551–578 (WRDVKLRAFDNAKHRTYVDLKDKWKTLV) constitute a DNA-binding region (H-T-H motif).

As to quaternary structure, homodimer. As to expression, expressed ubiquitously.

The protein localises to the nucleus. Its function is as follows. Binds specifically to the plant telomeric double-stranded DNA sequences. At least 6 repeats of telomeric sequences are required for binding. In Arabidopsis thaliana (Mouse-ear cress), this protein is Telomere repeat-binding protein 5 (TRP5).